Consider the following 1298-residue polypeptide: MLILRGAPALSAFRHSKLLEQLKQKVSAVSGLYAEFAHFADVNDVLTSEEQQVLDRLLKYGPSVPVQEPSGRLFLVLPRFGTISPWSSKASDIARNCGLSKIQRLERGIAFYVEGQFSETEAQAIADSLHDRMTQLVLGDLEQAANLFSHAQPKPLTAVDILGGGRAALEKANVELGLALAEDEIDYLITSFNGLGRNPHDIELMMFAQANSEHCRHKIFNASWDIDGQSQEKSLFGMIKNTYQMHSEGVLSAYKDNASVIVGNVAGRFFPDPETRQYGAVQEPVHILMKVETHNHPTAIAPFPGAATGSGGEIRDEGATGRGAKPKAGLTGFTVSNLQIPGFVQPWEVPYGKPERIVTALDIMIEGPLGGAAFNNEFGRPALTGYFRTFEQSITTPHGDEVRGYHKPIMLAGGMGNIREDHVQKGEITVGSKLIVLGGPAMLIGLGGGAASSMATGTSSADLDFASVQRENPEMERRCQEVIDRCWQLGDRNPISFIHDVGAGGLSNAFPELVNDGDRGGRFELRNVPNDEPGMAPLEIWSNESQERYVLAVGVEDFERFKAICERERCPFAVVGEATAEPQLTVTDSHFGNSPVDMPLEVLLGKAPRMHRSVAREEEIGDDFDPSTLDIEESVQRVLRHPAVASKSFLITIGDRSITGLVARDQMVGPWQVPVADCAVTATSFDVNTGEAMAMGERTPLALLDAPASGRMAIGETLTNIAASLIEKLSDIKLSANWMSAAGHPGEDARLYDTVKAVGMELCPELGITIPVGKDSMSMKTRWSDEGTEKSVTSPLSLIVTGFAPVVDIRQTLTPELRMDKGITDLILIDLGRGQNRMGASILAQTHGKLGRVAPDVDDAEDLKAFFAVIQGLNSDGHILSYHDRSDGGLLVSTLEMAFAGHCGLNLHLDGVADNVSELSAILFNEELGAVIQVRQDATPLVLAQFSAAGLEDCVAVIGQPINNDEVSISFHGEPVFSGQRRLLQRQWAETSYQIQRLRDNAECADQEFDALLEEDNPGLTVKLGFDVNDDIAAPYIKTGVRPQVAVLREQGVNGQVEMAAAFDRAGFNAIDVHMSDILAGRVDLNDFKGMVACGGFSYGDVLGAGEGWAKSALFNSRARDAFQGFFERSDSFTLGVCNGCQMLSNLHELIPGSEFWPHFVRNRSEQFEARVAMVQVQESASIFLQGMAGSRMPIAIAHGEGHAEFRNDDALLEADVSGTVALRFVDNHGKVTETYPANPNGSPRGIGGMTTLDGRVTIMMPHPERVFRAVQNSWRPEDWNEDGAWMRMFRNARAWVN.

Positions 303 to 327 (FPGAATGSGGEIRDEGATGRGAKPK) are disordered. Residues 305–316 (GAATGSGGEIRD), 384–386 (TGY), and A676 contribute to the ATP site. Positions 677, 716, 720, and 884 each coordinate Mg(2+). S886 is an ATP binding site. Residues 1045–1298 (VAVLREQGVN…MFRNARAWVN (254 aa)) enclose the Glutamine amidotransferase type-1 domain. Residue C1138 is the Nucleophile of the active site. Catalysis depends on residues H1263 and E1265.

It in the N-terminal section; belongs to the FGAMS family. In terms of assembly, monomer.

The protein localises to the cytoplasm. It carries out the reaction N(2)-formyl-N(1)-(5-phospho-beta-D-ribosyl)glycinamide + L-glutamine + ATP + H2O = 2-formamido-N(1)-(5-O-phospho-beta-D-ribosyl)acetamidine + L-glutamate + ADP + phosphate + H(+). Its pathway is purine metabolism; IMP biosynthesis via de novo pathway; 5-amino-1-(5-phospho-D-ribosyl)imidazole from N(2)-formyl-N(1)-(5-phospho-D-ribosyl)glycinamide: step 1/2. In terms of biological role, phosphoribosylformylglycinamidine synthase involved in the purines biosynthetic pathway. Catalyzes the ATP-dependent conversion of formylglycinamide ribonucleotide (FGAR) and glutamine to yield formylglycinamidine ribonucleotide (FGAM) and glutamate. This chain is Phosphoribosylformylglycinamidine synthase, found in Pseudomonas syringae pv. syringae (strain B728a).